Consider the following 332-residue polypeptide: Protein phosphatase PTC7 homolog fig (332 aa).

The 256-residue stretch at 70–325 (KPCSPRERAN…DDITLILASV (256 aa)) folds into the PPM-type phosphatase domain. Residues Asp-102, Gly-103, and Asp-247 each coordinate Mn(2+).

Belongs to the PP2C family. Mg(2+) is required as a cofactor. The cofactor is Mn(2+).

It catalyses the reaction O-phospho-L-seryl-[protein] + H2O = L-seryl-[protein] + phosphate. It carries out the reaction O-phospho-L-threonyl-[protein] + H2O = L-threonyl-[protein] + phosphate. The sequence is that of Protein phosphatase PTC7 homolog fig from Drosophila ananassae (Fruit fly).